The sequence spans 976 residues: 3-O-beta-L-arabinopyranosyl-alpha-L-arabinofuranosidase (976 aa).

The N-terminal stretch at 1-28 is a signal peptide; that stretch reads MSHRNKALVAIVAGTALLISSGAAIGQA. Residue Glu-190 is the Proton donor of the active site. Glu-315 acts as the Nucleophile in catalysis. The region spanning 519–654 is the CBM6 domain; it reads LLVEEVENTV…DNTLDKFLLY (136 aa).

This sequence belongs to the glycosyl hydrolase 39 family.

Its subcellular location is the secreted. The catalysed reaction is Hydrolysis of beta-L-Arap-(1-&gt;3)-L-Araf disaccharides from non-reducing terminals in branches of type II arabinogalactan attached to proteins.. In terms of biological role, hydrolase involved in the degradation of the gum arabic arabinogalactan protein (AGP) and larch AGP. Catalyzes the release of 3-O-beta-L-arabinopyranosyl-L-arabinose (beta-L-Arap-(1-&gt;3)-L-Ara) from gum arabic AGP and larch AGP. Also cleaves a small amount of beta-L-Arap-(1-&gt;3)-L-Ara from sugar beet arabinan, but wheat AGP cannot be used as a substrate. Can also release 3-O-alpha-D-galactopyranosyl-L-arabinose (alpha-D-Galp-(1-&gt;3)-L-Ara) from gum arabic AGP, with low efficiency. The sequence is that of 3-O-beta-L-arabinopyranosyl-alpha-L-arabinofuranosidase from Bifidobacterium pseudocatenulatum.